A 160-amino-acid polypeptide reads, in one-letter code: Heat shock protein beta-6 (160 aa).

The interval 1–72 (MEIPVPVQPS…PVAQVPTDPG (72 aa)) is involved in stabilization of the HSPB1:HSBP6 heterodimer. S16 is modified (phosphoserine; by PKA). The 106-residue stretch at 55-160 (LRAPSVALPV…AQAPPPAAAK (106 aa)) folds into the sHSP domain. Q66 carries the post-translational modification Deamidated glutamine.

Belongs to the small heat shock protein (HSP20) family. Homodimer. Small heat shock proteins form high molecular mass oligomers containing variable number of monomers; these oligomers display a very flexible quaternary structure easily exchanging their subunits. Heterooligomer with HSPB1; formed through oligomerization of HSPB1:HSBP6 dimers; subunit exchange leads to formation of at least two different heterooligomeric complexes, differing in variable quantities of HSPB1 and HSPB6 homodimers in addition to HSPB1:HSPB6 heterodimers. Heterooligomer with CRYAB; large heterooligomers consist of CRYAB homodimers and HSPB5:HSPB6 heterodimers but lacking HSPB6 homodimers. Interacts with BAG3. Interacts (phosphorylated) with YWHAZ. Interacts with PDE4A and PDE4D; required for maintenance of the non-phosphorylated state of HSPB6 under basal conditions. Interacts with KDR. Interacts with PRKD1. Post-translationally, the N-terminus is blocked. In terms of processing, phosphorylated at Ser-16 by PKA and probably PKD1K; required to protect cardiomyocytes from apoptosis.

The protein localises to the cytoplasm. It localises to the nucleus. Its subcellular location is the secreted. Its function is as follows. Small heat shock protein which functions as a molecular chaperone probably maintaining denatured proteins in a folding-competent state. Seems to have versatile functions in various biological processes. Plays a role in regulating muscle function such as smooth muscle vasorelaxation and cardiac myocyte contractility. May regulate myocardial angiogenesis implicating KDR. Overexpression mediates cardioprotection and angiogenesis after induced damage. Stabilizes monomeric YWHAZ thereby supporting YWHAZ chaperone-like activity. The sequence is that of Heat shock protein beta-6 (HSPB6) from Homo sapiens (Human).